A 1370-amino-acid chain; its full sequence is MRPTDETYFETLETGLDDAFEVAEAARERGEDPTPNVEIPVAKDMADRVENILGIDGVAERVRDLDGEMSREEAALELVADFVDGRVGDYDTDAGKIEGAVRTAVALLTEGVVAAPIEGIDRVEVNDNDDGTQYVAVYYAGPIRSAGGTAQALSVLVADYARAMLGIDAFKPRDDEIERYAEEVDLYDSETGLQYSPKDAETTFITEHCPVMLDGEATGNEEVDGFRDLERIDTNSPRGGMCLVLAEGIALKAPKIQRYTRNLDEVAWPWLQDLIDGTIGADDADEDTPDAGSDSDATDEGDAPSASTDAEEPPRAAPSDKFLRDLIAGRPVFGHPSKNGGFRLRYGRARNHGNATAGVHPATMHLLDDFLATGTQIKTERPGKAAGIVPVDSIEGPTVKLANGDVRHINDPADALDVRNGVAEILDVGEYLVNYGEFVENNHELAPASYAPEWWIQDLDAAGADVQALRDSPYVDLTAPTADQAMAWATDYDAPLHPAYTYLWHDIDVEQFRALADAVADAHTDASDDDDRGVLVLDHTTTVRETLEALLVTHHQGDDTIRVDDWLPLARSLGVTESLDREWETLSEAAAEWPNAVRAVNEVAPFSVQERAPTRIGNRMGRPEKSESRDLSPAVHTLFPIGDAGGSQRDVADAARYAPDMSDTPGEIPVRVGDRVCPSCDEHTYESRCPDCGDWTDPHYECRDCGAVATPDESGRVECPNCGRDLDNVTTQVIDINDEYHGALRAVGERENAFDQLKGVKGLLSAEKTPEPMAKGVLRAKHDVTAFKDGTVRYDMTDLPVTAVTPAELDVTAGQFRELGYNQDIHGDPLEHDDQLVELRVQDVVLSDGAADHMLKTADFVDDLLTQYYGLDAFYDLDDRDDLVGELVFGMAPHTSAAVVGRVAGFTSASVGYAHPYFHAAKRRNCFHPETNVWFRDESGEWHHDPIETLVEARLDPDTADEDDFGALVQALDGDVFVPSVTEDGEETLQRVEAVSKHPAPDHLLAVETKRGRELTVTPDHSMRRWTGDGIERVDARELTAGDALPAPTQVPGDGETATSELRSESLDGTHPQRRFGDGGSVRTDEVVSVEPVRSSVDHTYSLTVAETNTLVANGLFTGQCDGDEDCVMLLMDGLINFSKSYLPDKRGGRMDAPLVMSSRIDPAEIDDEAHNIDIDREYPREFYEATRELADPEDVADLITLAESTVGTDEEYTGFGHTHATSNIHLGPSLSAYKTLGSMMDKMDAQLELARKLRSVAETDVAERVIEYHFLPDLIGNLRAFSRQETRCLDCGEKYRRMPLSGDCRECGGRVNLTVHEGSVNKYMDTAMRVATEYDCREYTKQRLEIMDRRLESVFEDDTNKQSGISDFM.

Disordered regions lie at residues 279–317 and 1041–1081; these read IGAD…PRAA and AGDA…DGGS.

This sequence belongs to the archaeal DNA polymerase II family. As to quaternary structure, heterodimer of a large subunit and a small subunit. Post-translationally, this protein undergoes a protein self splicing that involves a post-translational excision of the intervening region (intein) followed by peptide ligation.

It carries out the reaction DNA(n) + a 2'-deoxyribonucleoside 5'-triphosphate = DNA(n+1) + diphosphate. The catalysed reaction is Exonucleolytic cleavage in the 3'- to 5'-direction to yield nucleoside 5'-phosphates.. Functionally, possesses two activities: a DNA synthesis (polymerase) and an exonucleolytic activity that degrades single-stranded DNA in the 3'- to 5'-direction. Has a template-primer preference which is characteristic of a replicative DNA polymerase. In Halobacterium salinarum (strain ATCC 700922 / JCM 11081 / NRC-1) (Halobacterium halobium), this protein is DNA polymerase II large subunit (polC).